Reading from the N-terminus, the 150-residue chain is MFIGRHYRKKRALSLLAVRTTQKARKLLIVMWTPPRNDQQYLNWQWYSSVLSSHAAMCGCPDAVAHFNHLASVLRAPQNPPPPGPQRNLPLRRLPALPAAPEAPGDRAPWPMAGGAEGEEGGAGGDADHGGAAGGPEDADLLDAVAAAET.

The segment at 75-150 (RAPQNPPPPG…LLDAVAAAET (76 aa)) is disordered. Positions 86-103 (QRNLPLRRLPALPAAPEA) are enriched in low complexity.

This is an uncharacterized protein from Homo sapiens (Human).